The primary structure comprises 201 residues: ADP-ribosylation factor-related protein 1 (201 aa).

Met-1 is subject to N-acetylmethionine. Residues 24-31 (GLDNAGKT), 75-79 (DLGGQ), and 134-137 (NKQD) contribute to the GTP site.

It belongs to the small GTPase superfamily. Arf family. Interacts with SYS1.

Its subcellular location is the golgi apparatus. The protein localises to the trans-Golgi network. Trans-Golgi-associated GTPase that regulates protein sorting. Controls the targeting of ARL1 and its effector to the trans-Golgi. Required for the lipidation of chylomicrons in the intestine and required for VLDL lipidation in the liver. This chain is ADP-ribosylation factor-related protein 1 (ARFRP1), found in Pongo abelii (Sumatran orangutan).